The primary structure comprises 713 residues: U3 small nucleolar RNA-associated protein 8 (713 aa).

Position 95 is a phosphothreonine (threonine 95). Phosphoserine occurs at positions 148 and 150.

In terms of assembly, interacts with snoRNA U3. Interacts with MPP10 and UTP25. Component of the ribosomal small subunit (SSU) processome composed of at least 40 protein subunits and snoRNA U3. In the absence of snoRNA3, forms a complex with other t-UTPs. This complex can associate with pre-18S ribosomal RNAs.

The protein localises to the nucleus. It is found in the nucleolus. Involved in nucleolar processing of pre-18S ribosomal RNA. Also has a role in nuclear tRNA export. It acts between the steps of tRNA maturation/aminoacylation and its subsequent translocation out of the nucleus. Required for optimal pre-ribosomal RNA transcription by RNA polymerase I together with a subset of U3 proteins required for transcription (t-UTPs). In Saccharomyces cerevisiae (strain ATCC 204508 / S288c) (Baker's yeast), this protein is U3 small nucleolar RNA-associated protein 8 (UTP8).